Consider the following 427-residue polypeptide: FAD-dependent monooxygenase OpS4 (427 aa).

An N-terminal signal peptide occupies residues 1-22 (MGSIREPLHLVVIGGGLAGLSA). Glu-37 provides a ligand contact to FAD. N-linked (GlcNAc...) asparagine glycosylation occurs at Asn-54. Residues Arg-112, Asp-306, and Ala-319 each contribute to the FAD site.

The protein belongs to the paxM FAD-dependent monooxygenase family. Requires FAD as cofactor.

It participates in secondary metabolite biosynthesis. Functionally, FAD-dependent monooxygenase; part of the gene cluster that mediates the biosynthesis of the bibenzoquinone oosporein, a metabolite required for fungal virulence that acts by evading host immunity to facilitate fungal multiplication in insects. The non-reducing polyketide synthase OpS1 produces orsellinic acid by condensing acetyl-CoA with 3 malonyl-CoA units. Orsellinic acid is then hydroxylated to benzenetriol by the hydroxylase OpS4. The intermediate is oxidized either nonenzymatically to 5,5'-dideoxy-oosporein or enzymatically to benzenetetrol by the oxidoreductase OpS7. The latter is further dimerized to oosporein by the catalase OpS5. OpS6 probably functions en route for protecting cells against oxidative stress by scavenging any leaked free radical form of benzenetetrol by activating the thiol group of glutathione. The chain is FAD-dependent monooxygenase OpS4 from Beauveria bassiana (strain ARSEF 2860) (White muscardine disease fungus).